Reading from the N-terminus, the 145-residue chain is Basic phospholipase A2 BFPA (145 aa).

The first 27 residues, 1–27 (MNPAHLLVLLAVCVSLLGAANIPPQSL), serve as a signal peptide directing secretion. Disulfide bonds link cysteine 38–cysteine 97, cysteine 52–cysteine 144, cysteine 54–cysteine 70, cysteine 69–cysteine 125, cysteine 76–cysteine 118, cysteine 86–cysteine 111, and cysteine 104–cysteine 116. The Ca(2+) site is built by tyrosine 53, glycine 55, and glycine 57. Histidine 73 is a catalytic residue. Aspartate 74 is a Ca(2+) binding site. Residue aspartate 119 is part of the active site.

Belongs to the phospholipase A2 family. Group I subfamily. D49 sub-subfamily. Homodimer; disulfide-linked. The cofactor is Ca(2+). As to expression, expressed by the venom gland.

It is found in the secreted. It catalyses the reaction a 1,2-diacyl-sn-glycero-3-phosphocholine + H2O = a 1-acyl-sn-glycero-3-phosphocholine + a fatty acid + H(+). Its function is as follows. Snake venom phospholipase A2 (PLA2) that inhibits blood coagulation and shows bactericidal activities against both Gram-negative and -positive bacteria (E.coli, MIC=0.4 uM and S.aureus, MIC=0.1 uM). PLA2 catalyzes the calcium-dependent hydrolysis of the 2-acyl groups in 3-sn-phosphoglycerides. This Bungarus fasciatus (Banded krait) protein is Basic phospholipase A2 BFPA.